A 1011-amino-acid chain; its full sequence is Protein translocase subunit SecA (1011 aa).

ATP is bound by residues Gln87, 105–109 (GEGKT), and Asp500. A disordered region spans residues 969–1011 (SLPLGANPAPARPQPAVMQEQECPCGSGKPFNKCHGGEDEATA). Positions 991, 993, 1002, and 1003 each coordinate Zn(2+).

Belongs to the SecA family. In terms of assembly, monomer and homodimer. Part of the essential Sec protein translocation apparatus which comprises SecA, SecYEG and auxiliary proteins SecDF-YajC and YidC. Zn(2+) is required as a cofactor.

Its subcellular location is the cell inner membrane. The protein localises to the cytoplasm. It catalyses the reaction ATP + H2O + cellular proteinSide 1 = ADP + phosphate + cellular proteinSide 2.. Its function is as follows. Part of the Sec protein translocase complex. Interacts with the SecYEG preprotein conducting channel. Has a central role in coupling the hydrolysis of ATP to the transfer of proteins into and across the cell membrane, serving as an ATP-driven molecular motor driving the stepwise translocation of polypeptide chains across the membrane. The sequence is that of Protein translocase subunit SecA from Sorangium cellulosum (strain So ce56) (Polyangium cellulosum (strain So ce56)).